A 296-amino-acid polypeptide reads, in one-letter code: NAD kinase (296 aa).

Catalysis depends on Asp72, which acts as the Proton acceptor. NAD(+) is bound by residues 72 to 73 (DG), 146 to 147 (ND), Arg157, Lys174, Asp176, 187 to 192 (TAYALS), and Gln247.

It belongs to the NAD kinase family. A divalent metal cation is required as a cofactor.

Its subcellular location is the cytoplasm. It catalyses the reaction NAD(+) + ATP = ADP + NADP(+) + H(+). Involved in the regulation of the intracellular balance of NAD and NADP, and is a key enzyme in the biosynthesis of NADP. Catalyzes specifically the phosphorylation on 2'-hydroxyl of the adenosine moiety of NAD to yield NADP. The polypeptide is NAD kinase (Pseudomonas syringae pv. syringae (strain B728a)).